The following is a 700-amino-acid chain: Elongation factor G (700 aa).

Positions 10-285 constitute a tr-type G domain; that stretch reads DRTRNIGIMA…AVIDYLPSPL (276 aa). Residues 19 to 26, 83 to 87, and 137 to 140 each bind GTP; these read AHIDAGKT, DTPGH, and NKMD.

Belongs to the TRAFAC class translation factor GTPase superfamily. Classic translation factor GTPase family. EF-G/EF-2 subfamily.

Its subcellular location is the cytoplasm. In terms of biological role, catalyzes the GTP-dependent ribosomal translocation step during translation elongation. During this step, the ribosome changes from the pre-translocational (PRE) to the post-translocational (POST) state as the newly formed A-site-bound peptidyl-tRNA and P-site-bound deacylated tRNA move to the P and E sites, respectively. Catalyzes the coordinated movement of the two tRNA molecules, the mRNA and conformational changes in the ribosome. The chain is Elongation factor G from Lacticaseibacillus casei (strain BL23) (Lactobacillus casei).